We begin with the raw amino-acid sequence, 426 residues long: Synaptotagmin-13 (426 aa).

Over Met1–Pro6 the chain is Vesicular. Residues Val7 to Leu29 traverse the membrane as a helical segment. Residues Cys30–Leu426 are Cytoplasmic-facing. C2 domains lie at Gln158–Gly275 and Gly287–His422.

This sequence belongs to the synaptotagmin family. Interacts with NRXN1. As to expression, expressed in brain, heart, spleen, lung and testis.

It localises to the cytoplasmic vesicle membrane. Functionally, may be involved in transport vesicle docking to the plasma membrane. The protein is Synaptotagmin-13 (Syt13) of Mus musculus (Mouse).